The sequence spans 55 residues: MSRKKKVLVKLVSSAGTGVFWVKQRNPKTQTEKLSFRKYDPKVRKHVQFTEAKIK.

The protein belongs to the bacterial ribosomal protein bL33 family.

The chain is Large ribosomal subunit protein bL33 from Orientia tsutsugamushi (strain Boryong) (Rickettsia tsutsugamushi).